A 34-amino-acid polypeptide reads, in one-letter code: MSDINASRLPAWLATCPCVGDDVNPTLSRGESLC.

Residues M1–P10 constitute a propeptide that is removed on maturation. Positions A11–P17 form a cross-link, cyclopeptide (Ala-Pro). Residues W12 to C16 constitute a cross-link (2'-cysteinyl-6'-hydroxytryptophan sulfoxide (Trp-Cys)). Positions C18–C34 are excised as a propeptide.

The protein belongs to the MSDIN fungal toxin family. Post-translationally, processed by the macrocyclase-peptidase enzyme POPB to yield a toxic cyclic heptapeptide. POPB first removes 10 residues from the N-terminus. Conformational trapping of the remaining peptide forces the enzyme to release this intermediate rather than proceed to macrocyclization. The enzyme rebinds the remaining peptide in a different conformation and catalyzes macrocyclization of the N-terminal 7 residues.

Toxin that belongs to the bicyclic heptapeptides called phallotoxins. Although structurally related to amatoxins, phallotoxins have a different mode of action, which is the stabilization of F-actin. Phallotoxins are poisonous when administered parenterally, but not orally because of poor absorption. This chain is Phalloidin proprotein, found in Amanita phalloides (Death cap).